Reading from the N-terminus, the 148-residue chain is Putative transmembrane protein ORF23 (148 aa).

The N-terminal stretch at 1-18 (MVIILLGVSIVVPGLFLA) is a signal peptide. The Extracellular portion of the chain corresponds to 19-118 (TETPQTNTFE…YVGWPSGAET (100 aa)). The helical transmembrane segment at 119 to 139 (IITNIADIIIMATAVMIIGAI) threads the bilayer. Topologically, residues 140 to 148 (YTGYKVSIK) are cytoplasmic.

The protein localises to the host membrane. This chain is Putative transmembrane protein ORF23, found in His1 virus (isolate Australia/Victoria) (His1V).